The primary structure comprises 183 residues: Probable chemoreceptor glutamine deamidase CheD (183 aa).

It belongs to the CheD family.

The enzyme catalyses L-glutaminyl-[protein] + H2O = L-glutamyl-[protein] + NH4(+). Functionally, probably deamidates glutamine residues to glutamate on methyl-accepting chemotaxis receptors (MCPs), playing an important role in chemotaxis. The polypeptide is Probable chemoreceptor glutamine deamidase CheD (Zymomonas mobilis subsp. mobilis (strain ATCC 31821 / ZM4 / CP4)).